We begin with the raw amino-acid sequence, 232 residues long: Phosphatidylserine decarboxylase proenzyme (232 aa).

The active-site Schiff-base intermediate with substrate; via pyruvic acid is serine 190. Position 190 is a pyruvic acid (Ser); by autocatalysis (serine 190).

This sequence belongs to the phosphatidylserine decarboxylase family. PSD-A subfamily. As to quaternary structure, heterodimer of a large membrane-associated beta subunit and a small pyruvoyl-containing alpha subunit. Pyruvate is required as a cofactor. In terms of processing, is synthesized initially as an inactive proenzyme. Formation of the active enzyme involves a self-maturation process in which the active site pyruvoyl group is generated from an internal serine residue via an autocatalytic post-translational modification. Two non-identical subunits are generated from the proenzyme in this reaction, and the pyruvate is formed at the N-terminus of the alpha chain, which is derived from the carboxyl end of the proenzyme. The post-translation cleavage follows an unusual pathway, termed non-hydrolytic serinolysis, in which the side chain hydroxyl group of the serine supplies its oxygen atom to form the C-terminus of the beta chain, while the remainder of the serine residue undergoes an oxidative deamination to produce ammonia and the pyruvoyl prosthetic group on the alpha chain.

It is found in the cell membrane. The catalysed reaction is a 1,2-diacyl-sn-glycero-3-phospho-L-serine + H(+) = a 1,2-diacyl-sn-glycero-3-phosphoethanolamine + CO2. It participates in phospholipid metabolism; phosphatidylethanolamine biosynthesis; phosphatidylethanolamine from CDP-diacylglycerol: step 2/2. Functionally, catalyzes the formation of phosphatidylethanolamine (PtdEtn) from phosphatidylserine (PtdSer). Important for establishment of root nodule symbiosis with the host plant. In Rhizobium meliloti (strain 1021) (Ensifer meliloti), this protein is Phosphatidylserine decarboxylase proenzyme.